Consider the following 265-residue polypeptide: Acrosomal protein SP-10 (265 aa).

The N-terminal stretch at methionine 1 to serine 21 is a signal peptide. The disordered stretch occupies residues leucine 62–serine 181. 16 tandem repeats follow at residues serine 66–serine 70, serine 71–serine 75, serine 85–histidine 88, serine 91–serine 95, valine 110–proline 114, serine 115–proline 119, serine 120–histidine 123, serine 125–proline 129, serine 135–proline 139, serine 140–proline 144, serine 145–histidine 148, serine 150–proline 154, serine 155–alanine 159, serine 160–proline 164, serine 165–histidine 168, and serine 170–alanine 174. Positions serine 66 to serine 95 are 3 X 5 AA repeats of S-E-H-[GA]-S. Residues glycine 69–valine 110 are compositionally biased toward basic and acidic residues. Residues serine 85–histidine 168 form a 4 X 4 AA repeats of S-G-E-H region. A 9 X 5 AA repeats of [SV]-G-E-Q-[PSA] region spans residues valine 110–alanine 174. The span at glutamate 152–glutamine 163 shows a compositional bias: polar residues. Residue asparagine 258 is glycosylated (N-linked (GlcNAc...) asparagine).

As to expression, testis.

It is found in the cytoplasmic vesicle. It localises to the secretory vesicle. The protein resides in the acrosome. This Homo sapiens (Human) protein is Acrosomal protein SP-10 (ACRV1).